Consider the following 389-residue polypeptide: 23S rRNA (uracil(747)-C(5))-methyltransferase RlmC (389 aa).

Cys-6, Cys-14, Cys-17, and Cys-92 together coordinate [4Fe-4S] cluster. S-adenosyl-L-methionine is bound by residues Gln-217, Phe-246, Glu-273, and Asn-319. Catalysis depends on Cys-346, which acts as the Nucleophile.

The protein belongs to the class I-like SAM-binding methyltransferase superfamily. RNA M5U methyltransferase family. RlmC subfamily.

It catalyses the reaction uridine(747) in 23S rRNA + S-adenosyl-L-methionine = 5-methyluridine(747) in 23S rRNA + S-adenosyl-L-homocysteine + H(+). Functionally, catalyzes the formation of 5-methyl-uridine at position 747 (m5U747) in 23S rRNA. The protein is 23S rRNA (uracil(747)-C(5))-methyltransferase RlmC of Glaesserella parasuis serovar 5 (strain SH0165) (Haemophilus parasuis).